Reading from the N-terminus, the 236-residue chain is Phosphoribosylaminoimidazole-succinocarboxamide synthase (236 aa).

Belongs to the SAICAR synthetase family.

It catalyses the reaction 5-amino-1-(5-phospho-D-ribosyl)imidazole-4-carboxylate + L-aspartate + ATP = (2S)-2-[5-amino-1-(5-phospho-beta-D-ribosyl)imidazole-4-carboxamido]succinate + ADP + phosphate + 2 H(+). Its pathway is purine metabolism; IMP biosynthesis via de novo pathway; 5-amino-1-(5-phospho-D-ribosyl)imidazole-4-carboxamide from 5-amino-1-(5-phospho-D-ribosyl)imidazole-4-carboxylate: step 1/2. The protein is Phosphoribosylaminoimidazole-succinocarboxamide synthase of Cellvibrio japonicus (strain Ueda107) (Pseudomonas fluorescens subsp. cellulosa).